A 244-amino-acid polypeptide reads, in one-letter code: Inactive chemokine-binding protein (244 aa).

Residues Met1–Pro79 are disordered. Over residues Gln37–Ile53 the composition is skewed to polar residues. Residues Thr54 to Asp77 are compositionally biased toward acidic residues.

It belongs to the orthopoxvirus OPG001 family.

The protein resides in the host cytoplasm. Functionally, the protein is truncated in this vaccinal strain and presumably inactive, because the lack of signal peptide prevents the protein of being secreted. In the wild-type viruses inhibits host immune defense by binding to host chemokines. Binds host CC chemokines (beta chemokines) such as RANTES with high affinity, but not CXC or C chemokines (alpha and gamma chemokines). The protein is Inactive chemokine-binding protein (OPG001) of Vaccinia virus (strain Western Reserve) (VACV).